A 255-amino-acid polypeptide reads, in one-letter code: 5-oxoprolinase subunit A 1 (255 aa).

Belongs to the LamB/PxpA family. As to quaternary structure, forms a complex composed of PxpA, PxpB and PxpC.

It catalyses the reaction 5-oxo-L-proline + ATP + 2 H2O = L-glutamate + ADP + phosphate + H(+). Catalyzes the cleavage of 5-oxoproline to form L-glutamate coupled to the hydrolysis of ATP to ADP and inorganic phosphate. This Agrobacterium fabrum (strain C58 / ATCC 33970) (Agrobacterium tumefaciens (strain C58)) protein is 5-oxoprolinase subunit A 1.